Here is a 565-residue protein sequence, read N- to C-terminus: Dihydroxy-acid dehydratase (565 aa).

C50 serves as a coordination point for [2Fe-2S] cluster. D82 provides a ligand contact to Mg(2+). Residue C123 participates in [2Fe-2S] cluster binding. Mg(2+) is bound by residues D124 and K125. K125 is modified (N6-carboxylysine). C195 serves as a coordination point for [2Fe-2S] cluster. E447 is a Mg(2+) binding site. Residue S473 is the Proton acceptor of the active site.

It belongs to the IlvD/Edd family. In terms of assembly, homodimer. The cofactor is [2Fe-2S] cluster. Mg(2+) serves as cofactor.

The catalysed reaction is (2R)-2,3-dihydroxy-3-methylbutanoate = 3-methyl-2-oxobutanoate + H2O. It catalyses the reaction (2R,3R)-2,3-dihydroxy-3-methylpentanoate = (S)-3-methyl-2-oxopentanoate + H2O. The protein operates within amino-acid biosynthesis; L-isoleucine biosynthesis; L-isoleucine from 2-oxobutanoate: step 3/4. Its pathway is amino-acid biosynthesis; L-valine biosynthesis; L-valine from pyruvate: step 3/4. Functionally, functions in the biosynthesis of branched-chain amino acids. Catalyzes the dehydration of (2R,3R)-2,3-dihydroxy-3-methylpentanoate (2,3-dihydroxy-3-methylvalerate) into 2-oxo-3-methylpentanoate (2-oxo-3-methylvalerate) and of (2R)-2,3-dihydroxy-3-methylbutanoate (2,3-dihydroxyisovalerate) into 2-oxo-3-methylbutanoate (2-oxoisovalerate), the penultimate precursor to L-isoleucine and L-valine, respectively. In Halorhodospira halophila (strain DSM 244 / SL1) (Ectothiorhodospira halophila (strain DSM 244 / SL1)), this protein is Dihydroxy-acid dehydratase.